A 394-amino-acid chain; its full sequence is Growth-regulating factor 4 (394 aa).

The 36-residue stretch at 64 to 99 (PFTAAQYEELEQQALIYKYLVAGVPVPPDLVLPIRR) folds into the QLQ domain. Positions 125–169 (DPEPGRCRRTDGKKWRCSKEAAPDSKYCERHMHRGRNRSRKPVET) constitute a WRC domain. 2 consecutive short sequence motifs (bipartite nuclear localization signal) follow at residues 130–140 (RCRRTDGKKWR) and 158–165 (RGRNRSRK). The disordered stretch occupies residues 156–180 (MHRGRNRSRKPVETQLVAQSQPPSS). Positions 170-180 (QLVAQSQPPSS) are enriched in low complexity.

The protein belongs to the GRF family. As to quaternary structure, interacts with GIF1. Interacts with GSK2. In terms of tissue distribution, expressed in stems. Expressed in panicles.

Its subcellular location is the nucleus. With respect to regulation, transactivation activity is repressed by GSK2. Functionally, transcription activator that plays a role in the regulation of meristematic function in leaves, stems and inflorescences. Transcription activator that plays a regulatory role in grain development. Positively regulates grain size by promoting cell division and expansion, leading to increased grain length and width. Positively regulates the expression of genes promoting cell proliferation. Activates the expression of expansin genes to promote cell expansion and grain size. May promote grain size by activating brassinosteroid responses. Component of a network formed by the microRNA396 (miRNA396), the GRFs and their interacting factors (GIFs) acting in the regulation of meristem function, at least partially through the control of cell proliferation. Component of the miRNA396c-GRF4-GIF1 regulatory module that plays an important role in grain size determination. The polypeptide is Growth-regulating factor 4 (Oryza sativa subsp. japonica (Rice)).